We begin with the raw amino-acid sequence, 477 residues long: MDAVELARRLQEEATCSICLDYFTDPVMTACGHNFCRECIQMSWEKGKVKKGKKKQKGSFPCPECREMSPQRNLRPNRLLTKVAEMARQHPGLQKRDLCQAHQEPLKLFCQDDQSPICVVCREAQEHRMHRVLPLDEAAREYKLKLEEDIKYLREEMMKTETLQAKEEQTLTEWQERVKERRERILEEFQKVVLFLVEEERRILQVLKKEEEDTLGKLQDSKASLDHQSRSLDLILLQLEERSQQEPLQMLQDVKDTLNRKESFSVQYPEVVLPAAIKTLCRVPGQIEVLKSFQEDVMPDPSSAYPYLLLYESRQRRYLSPPPEGSAPYSKDRFVAYPCAVGQKSFSSGRHYWEVGMNLTGDALWALGVCRDNVSRKDRVLKSPENGFWVVQLSKGKKQLSLLPNSTLVTLTEPPSHMGIFLDFQAGEVSFYSVNDGSHLHSFSQAAFPGPLLPFFCLGAPKSGQMVISTVTMWVKG.

Residues 16-66 (CSICLDYFTDPVMTACGHNFCRECIQMSWEKGKVKKGKKKQKGSFPCPECR) form an RING-type zinc finger. Residues 94 to 135 (QKRDLCQAHQEPLKLFCQDDQSPICVVCREAQEHRMHRVLPL) form a B box-type zinc finger. The Zn(2+) site is built by cysteine 99, histidine 102, cysteine 121, and histidine 127. The stretch at 135–226 (LDEAAREYKL…KLQDSKASLD (92 aa)) forms a coiled coil. The B30.2/SPRY domain maps to 276–475 (AIKTLCRVPG…MVISTVTMWV (200 aa)).

The protein belongs to the TRIM/RBCC family. In terms of assembly, interacts (via coiled coil) with TRIM44 (via coiled coil). Interacts with TRIM28; this interaction prevents TRIM28 activity on BCL2A1. Interacts with TRIM41; this interaction prevents TRIM41 activity on ZSCAN2. Interacts with BECN1. Interacts with NFATC3 and NFATC4; these interactions prevent NFATC3 and NFATC4 nuclear localization. Post-translationally, auto-ubiquitinated. In terms of tissue distribution, almost exclusively in the testis.

The protein localises to the cytoplasm. Its subcellular location is the lysosome. The enzyme catalyses S-ubiquitinyl-[E2 ubiquitin-conjugating enzyme]-L-cysteine + [acceptor protein]-L-lysine = [E2 ubiquitin-conjugating enzyme]-L-cysteine + N(6)-ubiquitinyl-[acceptor protein]-L-lysine.. It functions in the pathway protein modification; protein ubiquitination. Its function is as follows. E3 ubiquitin ligase that plays important roles in the regulation of neuronal apoptosis, selective autophagy or cell proliferation. Stimulates the degradation of kinetochore ZW10 interacting protein ZWINT in a proteasome-dependent manner, leading to negative regulation of cell proliferation. Inhibits autophagic degradation of diverse known targets while contributing to autophagy of midbodies. Autophagy-inhibitory activity involves MCL1, which TRIM17 assembles into complexes with the key autophagy regulator BECN1. Controls neuronal apoptosis by mediating ubiquitination and degradation of MCL1 to initiate neuronal death. In addition, regulates NFAT transcription factors NFATC3 and NFATC4 activities by preventing their nuclear localization, thus inhibiting their transcriptional activities. Decreases TRIM41-mediated degradation of ZSCAN2 thereby stimulating alpha-synuclein/SNCA transcription in neuronal cells. Prevents the E3 ubiquitin-ligase activity of TRIM28 and its interaction with anti-apoptotic BCL2A1, blocking TRIM28 from ubiquitinating BCL2A1. The polypeptide is E3 ubiquitin-protein ligase TRIM17 (Trim17) (Mus musculus (Mouse)).